The primary structure comprises 129 residues: Small ribosomal subunit protein uS9 (129 aa).

This sequence belongs to the universal ribosomal protein uS9 family.

The sequence is that of Small ribosomal subunit protein uS9 (rps9) from Thermoplasma acidophilum (strain ATCC 25905 / DSM 1728 / JCM 9062 / NBRC 15155 / AMRC-C165).